The primary structure comprises 103 residues: Small ribosomal subunit protein uS10 (103 aa).

This sequence belongs to the universal ribosomal protein uS10 family. Part of the 30S ribosomal subunit.

Its function is as follows. Involved in the binding of tRNA to the ribosomes. This is Small ribosomal subunit protein uS10 from Jannaschia sp. (strain CCS1).